Consider the following 832-residue polypeptide: Elongation factor 2 (832 aa).

Residues 17–336 enclose the tr-type G domain; it reads HNIRNMSVIA…MIVTHLPSPA (320 aa). 26–33 contacts GTP; that stretch reads AHVDHGKS. Thr-57 and Thr-59 each carry phosphothreonine. GTP is bound by residues 152–155 and 207–209; these read NKVD and SGL. Residues 580 to 608 are disordered; that stretch reads AEPLPDGLTDDIEEGKVSPRDDPKERSNL. The segment covering 593 to 608 has biased composition (basic and acidic residues); it reads EGKVSPRDDPKERSNL. Diphthamide is present on His-689.

This sequence belongs to the TRAFAC class translation factor GTPase superfamily. Classic translation factor GTPase family. EF-G/EF-2 subfamily.

The protein resides in the cytoplasm. The enzyme catalyses GTP + H2O = GDP + phosphate + H(+). Catalyzes the GTP-dependent ribosomal translocation step during translation elongation. During this step, the ribosome changes from the pre-translocational (PRE) to the post-translocational (POST) state as the newly formed A-site-bound peptidyl-tRNA and P-site-bound deacylated tRNA move to the P and E sites, respectively. Catalyzes the coordinated movement of the two tRNA molecules, the mRNA and conformational changes in the ribosome. In Cryptosporidium parvum, this protein is Elongation factor 2.